Consider the following 111-residue polypeptide: Large ribosomal subunit protein eL33x (111 aa).

It belongs to the eukaryotic ribosomal protein eL33 family.

The protein is Large ribosomal subunit protein eL33x (RPL35AD) of Arabidopsis thaliana (Mouse-ear cress).